Consider the following 349-residue polypeptide: Protein Wnt-7a (349 aa).

Positions 1–31 (MNRKARRCLGHLFLSLGMVYLRIGGFSTVVA) are cleaved as a signal peptide. Intrachain disulfides connect Cys-73-Cys-84, Cys-123-Cys-131, Cys-133-Cys-152, Cys-200-Cys-214, and Cys-202-Cys-209. N-linked (GlcNAc...) asparagine glycosylation is found at Asn-83 and Asn-127. Ser-206 carries the O-palmitoleoyl serine; by PORCN lipid modification. Residues 238-266 (VEPVRASRNKRPTFLKIKKPLSYRKPMDT) form a disordered linker region. 6 cysteine pairs are disulfide-bonded: Cys-278–Cys-309, Cys-294–Cys-304, Cys-308–Cys-348, Cys-324–Cys-339, Cys-326–Cys-336, and Cys-331–Cys-332. The N-linked (GlcNAc...) asparagine glycan is linked to Asn-295.

This sequence belongs to the Wnt family. As to quaternary structure, forms a soluble 1:1 complex with AFM; this prevents oligomerization and is required for prolonged biological activity. The complex with AFM may represent the physiological form in body fluids. Interacts with PORCN. Interacts (via intrinsically disordered linker region) with RECK; interaction with RECK confers ligand selectivity for Wnt7 in brain endothelial cells and allows these cells to selectively respond to Wnt7. Interacts with FZD5. Palmitoleoylation is required for efficient binding to frizzled receptors. Depalmitoleoylation leads to Wnt signaling pathway inhibition.

Its subcellular location is the secreted. It localises to the extracellular space. It is found in the extracellular matrix. Functionally, ligand for members of the frizzled family of seven transmembrane receptors that functions in the canonical Wnt/beta-catenin signaling pathway. Plays an important role in embryonic development, including dorsal versus ventral patterning during limb development, skeleton development and urogenital tract development. Required for central nervous system (CNS) angiogenesis and blood-brain barrier regulation. Required for normal, sexually dimorphic development of the Mullerian ducts, and for normal fertility in both sexes. Required for normal neural stem cell proliferation in the hippocampus dentate gyrus. Required for normal progress through the cell cycle in neural progenitor cells, for self-renewal of neural stem cells, and for normal neuronal differentiation and maturation. Promotes formation of synapses via its interaction with FZD5. The polypeptide is Protein Wnt-7a (WNT7A) (Chlorocebus aethiops (Green monkey)).